A 328-amino-acid polypeptide reads, in one-letter code: Telomere-binding protein cav (328 aa).

Residues R107–E320 form a required for binding to Su(var)205 region. Residues D139 to P228 form a disordered region. Composition is skewed to polar residues over residues Q144–S167 and A180–Q189. 2 short sequence motifs (su(var)205-binding Pro-containing repeat) span residues P228–M232 and P281–E287. Over residues I295–S319 the composition is skewed to polar residues. Residues I295 to A328 form a disordered region.

In terms of assembly, interacts (via C-terminus) with Su(var)205 dimer (via hinge and chromoshadow domain) and with moi to form the terminin, telomere-capping, complex. Interacts with HP6, which is also part of the terminin complex.

The protein resides in the nucleus. The protein localises to the chromosome. It localises to the telomere. Its function is as follows. Binds to chromosome ends in a sequence-dependent manner and is required for telomere capping. This Drosophila erecta (Fruit fly) protein is Telomere-binding protein cav.